The following is a 130-amino-acid chain: Small ribosomal subunit protein bS16 (130 aa).

Residues A98–E109 show a composition bias toward basic and acidic residues. The disordered stretch occupies residues A98–G130. The segment covering A110–G130 has biased composition (low complexity).

Belongs to the bacterial ribosomal protein bS16 family.

This chain is Small ribosomal subunit protein bS16, found in Synechococcus sp. (strain CC9902).